Reading from the N-terminus, the 276-residue chain is Carbonic anhydrase Nec1 (276 aa).

The first 27 residues, 1–27 (MKMINSIFTHGSLIILLLLFHSISIKA), serve as a signal peptide directing secretion. The 237-residue stretch at 34 to 270 (REFDYLEGSE…LNHREVQLHC (237 aa)) folds into the Alpha-carbonic anhydrase domain. C59 and C220 form a disulfide bridge. H98 functions as the Proton acceptor in the catalytic mechanism. Residues H124 and H126 each contribute to the Zn(2+) site. The N-linked (GlcNAc...) asparagine glycan is linked to N134. H143 contacts Zn(2+). The tract at residues 216–217 (TT) is substrate binding.

This sequence belongs to the alpha-class carbonic anhydrase family. In terms of assembly, homodimer. Zn(2+) is required as a cofactor. Confined to nectaries.

The enzyme catalyses hydrogencarbonate + H(+) = CO2 + H2O. It participates in one-carbon metabolism. Its function is as follows. Involved in the production of blood-red nectar containing the alkaloid nesocodin and that serves as a visual attractant for pollinator visitation, including vertebrates such as Phelsuma geckos. The nectar is initially acidic and pale yellow, but slowly becomes alkaline before turning into red within 24 hours. Together with NEC2 and NEC3, facilitates the condensation of sinapaldehyde ((E)-3,5-dimethoxy-4-hydroxycinnamaldehyde) and proline to form nesocodin, a pigment with a stable imine bond. Mediates the alkalinization (pH increase) of the flower nectar by catalyzing the reversible hydration of carbon dioxide. This chain is Carbonic anhydrase Nec1, found in Nesocodon mauritianus (Blue Mauritius bellflower).